The primary structure comprises 180 residues: NAD(P)H-quinone oxidoreductase subunit I, chloroplastic (180 aa).

2 consecutive 4Fe-4S ferredoxin-type domains span residues 55-84 (GRIH…VDWR) and 95-124 (LNYS…MTEE). 8 residues coordinate [4Fe-4S] cluster: cysteine 64, cysteine 67, cysteine 70, cysteine 74, cysteine 104, cysteine 107, cysteine 110, and cysteine 114.

The protein belongs to the complex I 23 kDa subunit family. In terms of assembly, NDH is composed of at least 16 different subunits, 5 of which are encoded in the nucleus. [4Fe-4S] cluster serves as cofactor.

The protein resides in the plastid. It is found in the chloroplast thylakoid membrane. The catalysed reaction is a plastoquinone + NADH + (n+1) H(+)(in) = a plastoquinol + NAD(+) + n H(+)(out). It catalyses the reaction a plastoquinone + NADPH + (n+1) H(+)(in) = a plastoquinol + NADP(+) + n H(+)(out). Functionally, NDH shuttles electrons from NAD(P)H:plastoquinone, via FMN and iron-sulfur (Fe-S) centers, to quinones in the photosynthetic chain and possibly in a chloroplast respiratory chain. The immediate electron acceptor for the enzyme in this species is believed to be plastoquinone. Couples the redox reaction to proton translocation, and thus conserves the redox energy in a proton gradient. The polypeptide is NAD(P)H-quinone oxidoreductase subunit I, chloroplastic (Oryza nivara (Indian wild rice)).